Here is a 703-residue protein sequence, read N- to C-terminus: Fanconi-associated nuclease 1 homolog (703 aa).

Mn(2+)-binding residues include Glu529, Asp651, Glu666, and Val667. Residues 597–698 (YIREHQRKTF…EVDVEVCHVS (102 aa)) form the VRR-NUC domain.

It belongs to the FAN1 family. Mn(2+) serves as cofactor. It depends on Mg(2+) as a cofactor.

It is found in the nucleus. It catalyses the reaction Hydrolytically removes 5'-nucleotides successively from the 3'-hydroxy termini of 3'-hydroxy-terminated oligonucleotides.. In terms of biological role, nuclease required for the repair of DNA interstrand cross-links (ICL). Acts as a 5'-3' exonuclease that anchors at a cut end of DNA and cleaves DNA successively at every third nucleotide, allowing to excise an ICL from one strand through flanking incisions. The protein is Fanconi-associated nuclease 1 homolog of Schizosaccharomyces pombe (strain 972 / ATCC 24843) (Fission yeast).